Consider the following 1214-residue polypeptide: Transient receptor potential cation channel subfamily M member 4 (1214 aa).

Topologically, residues 1-782 are cytoplasmic; it reads MVVPEKEQSW…FHFWGAPVTI (782 aa). ATP contacts are provided by arginine 171, arginine 214, and leucine 225. Ca(2+)-binding residues include aspartate 270, alanine 392, aspartate 395, and glutamate 396. Arginine 421 and glycine 448 together coordinate ATP. Residues 783 to 803 form a helical membrane-spanning segment; it reads FMGNVVSYLLFLLLFSRVLLV. Topologically, residues 804-814 are extracellular; sequence DFQPAPPGSLE. The helical transmembrane segment at 815–835 threads the bilayer; it reads LLLYFWAFTLLCEELRQGLSG. The Ca(2+) site is built by glutamate 828 and glutamine 831. At 836-863 the chain is on the cytoplasmic side; the sequence is GGGSLASGGPGPGHASLSQRLRLYLADS. Residues 864–884 form a helical membrane-spanning segment; that stretch reads WNQCDLVALTCFLLGVGCRLT. Residues asparagine 865 and aspartate 868 each contribute to the Ca(2+) site. Topologically, residues 885–886 are extracellular; that stretch reads PG. Residues 887 to 910 form a helical membrane-spanning segment; the sequence is LYHLGRTVLCIDFMVFTVRLLHIF. At 911–930 the chain is on the cytoplasmic side; it reads TVNKQLGPKIVIVSKMMKDV. A helical membrane pass occupies residues 931-951; it reads FFFLFFLGVWLVAYGVATEGL. Residues 952–963 are Extracellular-facing; sequence LRPRDSDFPSIL. Positions 964 to 984 form an intramembrane region, pore-forming; sequence RRVFYRPYLQIFGQIPQEDMD. Residues 975–977 carry the Selectivity filter motif; that stretch reads FGQ. Over 985 to 1019 the chain is Extracellular; the sequence is VALMEHSNCSSEPGFWAHPPGAQAGTCVSQYANWL. Residue asparagine 992 is glycosylated (N-linked (GlcNAc...) asparagine). Cysteine 993 and cysteine 1011 form a disulfide bridge. The helical transmembrane segment at 1020-1040 threads the bilayer; that stretch reads VVLLLVIFLLVANILLVNLLI. The Cytoplasmic portion of the chain corresponds to 1041 to 1214; that stretch reads AMFSYTFGKV…PPPDLPGSKD (174 aa). A calmodulin-binding region spans residues 1076 to 1176; it reads APPFIVISHL…EYEQRLKVLE (101 aa). The stretch at 1134–1187 forms a coiled coil; the sequence is LARARDKRESDSERLKRTSQKVDLALKQLGHIREYEQRLKVLEREVQQCSRVLG. Residues 1136 to 1141 form a mediates modulation by decavanadate and PIP2-binding region; that stretch reads RARDKR. Serine 1145 and serine 1152 each carry phosphoserine; by PKC.

The protein belongs to the transient receptor (TC 1.A.4) family. LTrpC subfamily. TRPM4 sub-subfamily. As to quaternary structure, homotetramer. Phosphorylation by PKC leads to increase the sensitivity to Ca(2+). In terms of processing, sumoylated. Desumoylated by SENP1. In terms of tissue distribution, widely expressed with a high expression in intestine and prostate. In brain, it is both expressed in whole cerebral arteries and isolated vascular smooth muscle cells. Prominently expressed in Purkinje fibers. Expressed at higher levels in T-helper 2 (Th2) cells as compared to T-helper 1 (Th1) cells. Expressed in keratocytes.

It is found in the cell membrane. The protein localises to the endoplasmic reticulum. It localises to the golgi apparatus. The catalysed reaction is Na(+)(in) = Na(+)(out). The enzyme catalyses K(+)(in) = K(+)(out). With respect to regulation, displays weak voltage dependence, and repressed by decavanadate. Calmodulin-binding confers the Ca(2+) sensitivity. ATP is able to restore Ca(2+) sensitivity after desensitization. ATP inhibits channel activity. Phosphatidylinositol 4,5-bisphosphate (PIP2)-binding strongly enhances activity, by increasing the channel's Ca(2+) sensitivity and shifting its voltage dependence of activation towards negative potentials. Activity is also enhanced by 3,5-bis(trifluoromethyl)pyrazole derivative (BTP2). Exhibits pronounced temperature sensitivity, with activities strongly intensifying near physiological temperatures. In terms of biological role, calcium-activated selective cation channel that mediates membrane depolarization. While it is activated by increase in intracellular Ca(2+), it is impermeable to it. Mediates transport of monovalent cations (Na(+) &gt; K(+) &gt; Cs(+) &gt; Li(+)), leading to depolarize the membrane. It thereby plays a central role in cadiomyocytes, neurons from entorhinal cortex, dorsal root and vomeronasal neurons, endocrine pancreas cells, kidney epithelial cells, cochlea hair cells etc. Participates in T-cell activation by modulating Ca(2+) oscillations after T lymphocyte activation, which is required for NFAT-dependent IL2 production. Involved in myogenic constriction of cerebral arteries. Controls insulin secretion in pancreatic beta-cells. May also be involved in pacemaking or could cause irregular electrical activity under conditions of Ca(2+) overload. Affects T-helper 1 (Th1) and T-helper 2 (Th2) cell motility and cytokine production through differential regulation of calcium signaling and NFATC1 localization. Enhances cell proliferation through up-regulation of the beta-catenin signaling pathway. Plays a role in keratinocyte differentiation. Lacks channel activity. The sequence is that of Transient receptor potential cation channel subfamily M member 4 from Homo sapiens (Human).